The sequence spans 205 residues: Large ribosomal subunit protein uL4 (205 aa).

The disordered stretch occupies residues 48-79 (KAQKSRSDVSGGGKKPWKQKGSGHARAGTTRS).

This sequence belongs to the universal ribosomal protein uL4 family. Part of the 50S ribosomal subunit.

Its function is as follows. One of the primary rRNA binding proteins, this protein initially binds near the 5'-end of the 23S rRNA. It is important during the early stages of 50S assembly. It makes multiple contacts with different domains of the 23S rRNA in the assembled 50S subunit and ribosome. Forms part of the polypeptide exit tunnel. The chain is Large ribosomal subunit protein uL4 from Methylococcus capsulatus (strain ATCC 33009 / NCIMB 11132 / Bath).